The chain runs to 268 residues: uncharacterized protein (268 aa).

The protein to yeast YKR075c.

This is an uncharacterized protein from Saccharomyces cerevisiae (strain ATCC 204508 / S288c) (Baker's yeast).